The following is a 389-amino-acid chain: Teichoic acid ribitol-phosphate primase (389 aa).

The protein belongs to the CDP-glycerol glycerophosphotransferase family.

The protein resides in the cell membrane. It catalyses the reaction 4-O-[(2R)-glycerylphospho]-N-acetyl-beta-D-mannosaminyl-(1-&gt;4)-N-acetyl-alpha-D-glucosaminyl di-trans,octa-cis-undecaprenyl diphosphate + CDP-L-ribitol = 4-O-[1-D-ribitylphospho-(2R)-1-glycerylphospho]-N-acetyl-beta-D-mannosaminyl-(1-&gt;4)-N-acetyl-alpha-D-glucosaminyl di-trans,octa-cis-undecaprenyl diphosphate + CMP + H(+). The protein operates within cell wall biogenesis; poly(ribitol phosphate) teichoic acid biosynthesis. In terms of biological role, catalyzes the addition of a single ribitol phosphate unit onto the glycerol phosphate of the linkage unit, as a primer for polymerisation by TarL. The protein is Teichoic acid ribitol-phosphate primase (tarK) of Bacillus spizizenii (strain ATCC 23059 / NRRL B-14472 / W23) (Bacillus subtilis subsp. spizizenii).